A 362-amino-acid chain; its full sequence is Probable dual-specificity RNA methyltransferase RlmN (362 aa).

Catalysis depends on E105, which acts as the Proton acceptor. The region spanning 111–344 is the Radical SAM core domain; it reads HEYGNSICVT…VTIRREQGHD (234 aa). The cysteines at positions 118 and 349 are disulfide-linked. [4Fe-4S] cluster is bound by residues C125, C129, and C132. S-adenosyl-L-methionine is bound by residues 175–176, S207, 230–232, and N306; these read GE and SLH. C349 functions as the S-methylcysteine intermediate in the catalytic mechanism.

This sequence belongs to the radical SAM superfamily. RlmN family. Requires [4Fe-4S] cluster as cofactor.

Its subcellular location is the cytoplasm. It carries out the reaction adenosine(2503) in 23S rRNA + 2 reduced [2Fe-2S]-[ferredoxin] + 2 S-adenosyl-L-methionine = 2-methyladenosine(2503) in 23S rRNA + 5'-deoxyadenosine + L-methionine + 2 oxidized [2Fe-2S]-[ferredoxin] + S-adenosyl-L-homocysteine. The enzyme catalyses adenosine(37) in tRNA + 2 reduced [2Fe-2S]-[ferredoxin] + 2 S-adenosyl-L-methionine = 2-methyladenosine(37) in tRNA + 5'-deoxyadenosine + L-methionine + 2 oxidized [2Fe-2S]-[ferredoxin] + S-adenosyl-L-homocysteine. In terms of biological role, specifically methylates position 2 of adenine 2503 in 23S rRNA and position 2 of adenine 37 in tRNAs. This is Probable dual-specificity RNA methyltransferase RlmN from Bacillus anthracis (strain A0248).